A 280-amino-acid polypeptide reads, in one-letter code: Bifunctional protein FolD (280 aa).

NADP(+)-binding positions include 164–166, Ser189, and Val230; that span reads GRS.

It belongs to the tetrahydrofolate dehydrogenase/cyclohydrolase family. As to quaternary structure, homodimer.

The enzyme catalyses (6R)-5,10-methylene-5,6,7,8-tetrahydrofolate + NADP(+) = (6R)-5,10-methenyltetrahydrofolate + NADPH. It catalyses the reaction (6R)-5,10-methenyltetrahydrofolate + H2O = (6R)-10-formyltetrahydrofolate + H(+). It functions in the pathway one-carbon metabolism; tetrahydrofolate interconversion. Its function is as follows. Catalyzes the oxidation of 5,10-methylenetetrahydrofolate to 5,10-methenyltetrahydrofolate and then the hydrolysis of 5,10-methenyltetrahydrofolate to 10-formyltetrahydrofolate. This Geotalea daltonii (strain DSM 22248 / JCM 15807 / FRC-32) (Geobacter daltonii) protein is Bifunctional protein FolD.